We begin with the raw amino-acid sequence, 328 residues long: Mannitol-1-phosphate 5-dehydrogenase (328 aa).

Leu3 to Gly14 contacts NAD(+).

It belongs to the mannitol dehydrogenase family.

The enzyme catalyses D-mannitol 1-phosphate + NAD(+) = beta-D-fructose 6-phosphate + NADH + H(+). The sequence is that of Mannitol-1-phosphate 5-dehydrogenase (mtlD) from Mycoplasma mycoides subsp. mycoides SC (strain CCUG 32753 / NCTC 10114 / PG1).